Reading from the N-terminus, the 347-residue chain is Probable cytosolic iron-sulfur protein assembly protein 1 (347 aa).

7 WD repeats span residues 11 to 48 (LHNE…DGLV), 62 to 101 (SHKK…GDAD), 122 to 161 (GHEN…EEYE), 168 to 207 (EHSQ…WEAA), 212 to 255 (GHEG…SIEE), 266 to 304 (VHGK…VWEV), and 311 to 347 (SHSI…WAYN).

This sequence belongs to the WD repeat CIA1 family. Interacts with NAR1.

It is found in the cytoplasm. Its subcellular location is the nucleus. Essential component of the cytosolic iron-sulfur (Fe/S) protein assembly machinery. Required for the maturation of extramitochondrial Fe/S proteins. This is Probable cytosolic iron-sulfur protein assembly protein 1 from Vanderwaltozyma polyspora (strain ATCC 22028 / DSM 70294 / BCRC 21397 / CBS 2163 / NBRC 10782 / NRRL Y-8283 / UCD 57-17) (Kluyveromyces polysporus).